Here is an 817-residue protein sequence, read N- to C-terminus: Leucine--tRNA ligase (817 aa).

The 'HIGH' region signature appears at 42–52 (PYPSGRLHMGH). Residues 576–580 (KMSKS) carry the 'KMSKS' region motif. Residue K579 participates in ATP binding.

Belongs to the class-I aminoacyl-tRNA synthetase family.

Its subcellular location is the cytoplasm. The enzyme catalyses tRNA(Leu) + L-leucine + ATP = L-leucyl-tRNA(Leu) + AMP + diphosphate. The chain is Leucine--tRNA ligase from Thioalkalivibrio sulfidiphilus (strain HL-EbGR7).